The chain runs to 103 residues: Sperm-associated antigen 11A (103 aa).

Residues 1-24 (MRQRLLPSVTSLLLVALLFPGSSQ) form the signal peptide. Asparagine 29 carries N-linked (GlcNAc...) asparagine glycosylation.

Belongs to the SPAG11 family.

It localises to the secreted. Has antimicrobial activity against E.coli. Plays a role in the defense response in the male reproductive tract, contributing to sperm maturation, storage and protection. This chain is Sperm-associated antigen 11A, found in Pan troglodytes (Chimpanzee).